A 298-amino-acid polypeptide reads, in one-letter code: Bifunctional protein FolD (298 aa).

Residues 165–167 (GRS), Ser190, and Ile231 contribute to the NADP(+) site.

It belongs to the tetrahydrofolate dehydrogenase/cyclohydrolase family. In terms of assembly, homodimer.

The enzyme catalyses (6R)-5,10-methylene-5,6,7,8-tetrahydrofolate + NADP(+) = (6R)-5,10-methenyltetrahydrofolate + NADPH. The catalysed reaction is (6R)-5,10-methenyltetrahydrofolate + H2O = (6R)-10-formyltetrahydrofolate + H(+). It functions in the pathway one-carbon metabolism; tetrahydrofolate interconversion. Its function is as follows. Catalyzes the oxidation of 5,10-methylenetetrahydrofolate to 5,10-methenyltetrahydrofolate and then the hydrolysis of 5,10-methenyltetrahydrofolate to 10-formyltetrahydrofolate. The chain is Bifunctional protein FolD from Prochlorococcus marinus (strain MIT 9515).